The sequence spans 184 residues: Cathelicidin-related peptide Pt_CRAMP1 (184 aa).

The first 22 residues, 1 to 22 (MEGFFWKTWLVVAAFAIGGTSS), serve as a signal peptide directing secretion. A propeptide spanning residues 23–150 (LPHKPLTYEE…EDEKDQPRRV (128 aa)) is cleaved from the precursor. 2 cysteine pairs are disulfide-bonded: cysteine 81–cysteine 92 and cysteine 103–cysteine 120. Acidic residues predominate over residues 125–144 (EDEEQNQEEEEEEEKEEDEK). Residues 125 to 147 (EDEEQNQEEEEEEEKEEDEKDQP) form a disordered region.

This sequence belongs to the cathelicidin family. Expressed by the venom gland.

It is found in the secreted. It localises to the target cell membrane. Its function is as follows. Potent antimicrobial peptide against Gram-negative (MIC=2 ug/ml against E.coli ATCC 25922, MIC=8 ug/ml against P.aeruginosa) and Gram-positive bacteria (MIC=32 ug/ml against E.faecalis, MIC=32 ug/ml against S.aureus). Adopts an amphipathic alpha helical conformation, that may allow to partition into the target membrane. High hemolytic activities have been observed on mammalian cells. The protein is Cathelicidin-related peptide Pt_CRAMP1 of Pseudonaja textilis (Eastern brown snake).